The chain runs to 458 residues: tRNA modification GTPase MnmE (458 aa).

(6S)-5-formyl-5,6,7,8-tetrahydrofolate contacts are provided by Arg-30, Glu-90, and Lys-129. Residues 225–379 (GLSICLIGCP…LHQTIDTIIW (155 aa)) form the TrmE-type G domain. Asn-235 serves as a coordination point for K(+). GTP contacts are provided by residues 235-240 (NVGKSS), 254-260 (SPIPGTT), and 279-282 (DTAG). Ser-239 is a binding site for Mg(2+). Residues Ser-254, Ile-256, and Thr-259 each contribute to the K(+) site. Mg(2+) is bound at residue Thr-260. A (6S)-5-formyl-5,6,7,8-tetrahydrofolate-binding site is contributed by Lys-458.

Belongs to the TRAFAC class TrmE-Era-EngA-EngB-Septin-like GTPase superfamily. TrmE GTPase family. Homodimer. Heterotetramer of two MnmE and two MnmG subunits. It depends on K(+) as a cofactor.

The protein localises to the cytoplasm. Its function is as follows. Exhibits a very high intrinsic GTPase hydrolysis rate. Involved in the addition of a carboxymethylaminomethyl (cmnm) group at the wobble position (U34) of certain tRNAs, forming tRNA-cmnm(5)s(2)U34. This chain is tRNA modification GTPase MnmE, found in Protochlamydia amoebophila (strain UWE25).